The primary structure comprises 225 residues: Insulin-induced gene 2 protein (225 aa).

Residues 1 to 28 (MAEGETKSPGPKKCGPYISSVTSQSVNL) are Cytoplasmic-facing. A helical membrane pass occupies residues 29–51 (MIRGVVLFFIGVFLALVLNLLQI). The Lumenal segment spans residues 52 to 70 (QRNVTLFPPDVIASIFSSA). The chain crosses the membrane as a helical span at residues 71-88 (WWVPPCCGTASAVIGLLY). The Cytoplasmic segment spans residues 89–103 (PCIDRHLGEPHKFKR). A helical transmembrane segment spans residues 104–126 (EWSSVMRCVAVFVGINHASAKVD). The Lumenal portion of the chain corresponds to 127 to 129 (FDN). A helical transmembrane segment spans residues 130–148 (NIQLSLTLAALSIGLWWTF). Residues 149–153 (DRSRS) lie on the Cytoplasmic side of the membrane. At S151 the chain carries Phosphoserine. The chain crosses the membrane as a helical span at residues 154-175 (GFGLGVGIAFLATVVTQLLVYN). Over 176–189 (GVYQYTSPDFLYVR) the chain is Lumenal. A helical membrane pass occupies residues 190 to 207 (SWLPCIFFAGGITMGNIG). At 208-225 (RQLAMYECKVIAEKSHQE) the chain is on the cytoplasmic side. Cysteine sulfenic acid (-SOH); alternate is present on C215. Residue C215 forms a Glycyl cysteine thioester (Cys-Gly) (interchain with G-Cter in ubiquitin); alternate linkage. The short motif at 219–225 (AEKSHQE) is the KxHxx element.

It belongs to the INSIG family. As to quaternary structure, interacts with SCAP; interaction is direct and only takes place in the presence of sterols; it prevents interaction between SCAP and the coat protein complex II (COPII). Associates with the SCAP-SREBP complex (composed of SCAP and SREBF1/SREBP1 or SREBF2/SREBP2); association is mediated via its interaction with SCAP and only takes place in the presence of sterols. Interacts with RNF139. Interacts with RNF145. In terms of processing, phosphorylation at Ser-151 by PCK1 reduces binding to oxysterol, disrupting the interaction between INSIG2 and SCAP, thereby promoting nuclear translocation of SREBP proteins (SREBF1/SREBP1 or SREBF2/SREBP2) and subsequent transcription of downstream lipogenesis-related genes. Post-translationally, polyubiquitinated by AMFR/gp78 at Cys-215 in some tissues such as adipose tissues, undifferentiated myoblasts and liver, leading to its degradation. In differentiated myotubes, Cys-215 oxidation prevents ubiquitination at the same site, resulting in protein stabilization. Oxidized at Cys-215 in differentiated myotubes, preventing ubiquitination at the same site, and resulting in protein stabilization.

The protein localises to the endoplasmic reticulum membrane. Functionally, oxysterol-binding protein that mediates feedback control of cholesterol synthesis by controlling both endoplasmic reticulum to Golgi transport of SCAP and degradation of HMGCR. Acts as a negative regulator of cholesterol biosynthesis by mediating the retention of the SCAP-SREBP complex in the endoplasmic reticulum, thereby blocking the processing of sterol regulatory element-binding proteins (SREBPs) SREBF1/SREBP1 and SREBF2/SREBP2. Binds oxysterol, including 22-hydroxycholesterol, 24-hydroxycholesterol, 25-hydroxycholesterol and 27-hydroxycholesterol, regulating interaction with SCAP and retention of the SCAP-SREBP complex in the endoplasmic reticulum. In presence of oxysterol, interacts with SCAP, retaining the SCAP-SREBP complex in the endoplasmic reticulum, thereby preventing SCAP from escorting SREBF1/SREBP1 and SREBF2/SREBP2 to the Golgi. Sterol deprivation or phosphorylation by PCK1 reduce oxysterol-binding, disrupting the interaction between INSIG2 and SCAP, thereby promoting Golgi transport of the SCAP-SREBP complex, followed by processing and nuclear translocation of SREBF1/SREBP1 and SREBF2/SREBP2. Also regulates cholesterol synthesis by regulating degradation of HMGCR: initiates the sterol-mediated ubiquitin-mediated endoplasmic reticulum-associated degradation (ERAD) of HMGCR via recruitment of the reductase to the ubiquitin ligase RNF139. This is Insulin-induced gene 2 protein from Pongo abelii (Sumatran orangutan).